Consider the following 1227-residue polypeptide: Pesticidal crystal protein Cry1Be (1227 aa).

This sequence belongs to the delta endotoxin family.

In terms of biological role, promotes colloidosmotic lysis by binding to the midgut epithelial cells of many lepidopteran larvae. The chain is Pesticidal crystal protein Cry1Be (cry1Be) from Bacillus thuringiensis.